The sequence spans 259 residues: tRNA pseudouridine synthase A (259 aa).

The active-site Nucleophile is the aspartate 51. Substrate is bound at residue tyrosine 109.

It belongs to the tRNA pseudouridine synthase TruA family. Homodimer.

The enzyme catalyses uridine(38/39/40) in tRNA = pseudouridine(38/39/40) in tRNA. Functionally, formation of pseudouridine at positions 38, 39 and 40 in the anticodon stem and loop of transfer RNAs. This is tRNA pseudouridine synthase A from Nitrosococcus oceani (strain ATCC 19707 / BCRC 17464 / JCM 30415 / NCIMB 11848 / C-107).